A 51-amino-acid polypeptide reads, in one-letter code: Bacteriochlorophyll e-binding protein (51 aa).

Position 25 (His-25) interacts with a bacteriochlorophyll e.

It belongs to the BChl C/E-binding protein family.

It is found in the chlorosome. The protein localises to the chlorosome envelope. In terms of biological role, component of the photosynthetic apparatus. The light harvesting B740 complex binds bacteriochlorophyll e. This chain is Bacteriochlorophyll e-binding protein (csmA), found in Chlorobium phaeovibrioides.